Here is a 438-residue protein sequence, read N- to C-terminus: Histidinol dehydrogenase (438 aa).

3 residues coordinate NAD(+): tyrosine 135, glutamine 193, and asparagine 216. Substrate contacts are provided by serine 243, glutamine 265, and histidine 268. Residues glutamine 265 and histidine 268 each coordinate Zn(2+). Active-site proton acceptor residues include glutamate 332 and histidine 333. Substrate is bound by residues histidine 333, aspartate 366, glutamate 420, and histidine 425. Aspartate 366 contacts Zn(2+). A Zn(2+)-binding site is contributed by histidine 425.

The protein belongs to the histidinol dehydrogenase family. Zn(2+) is required as a cofactor.

The enzyme catalyses L-histidinol + 2 NAD(+) + H2O = L-histidine + 2 NADH + 3 H(+). Its pathway is amino-acid biosynthesis; L-histidine biosynthesis; L-histidine from 5-phospho-alpha-D-ribose 1-diphosphate: step 9/9. Catalyzes the sequential NAD-dependent oxidations of L-histidinol to L-histidinaldehyde and then to L-histidine. This is Histidinol dehydrogenase from Shewanella oneidensis (strain ATCC 700550 / JCM 31522 / CIP 106686 / LMG 19005 / NCIMB 14063 / MR-1).